The primary structure comprises 377 residues: MTEKKLHVALLFGGNSSEHDVSKRSAHNIYDGMDKDKYDVSIFMFTKDGILLDNEASQRIFDGEPEDQVVQEAYQKMDLDAPLAPIAALSTVKEIDFFYPVIHGNLGEDGTVQGLFRLLKKPYIGSGIASSAMSFDKDLTKRILNQAGIRNTKYLLVTPQNKDQYSWSRIKEELGDLVFVKPAKQGSSVGIHKVDTEEEYETAMKDAFTYDYKVLVEAGIKNPREIEISILGNENPIASKLGGIRVPEGDEFYDYENKFVDASGVVFDLPVIVDDDLAKEITDMALKAYEALGMKGMARIDFLVDEDGVPYLGEPNTLPGFTNISLYPQMWNISGISYSELIDRLIQLGIEEFEYEGQLRYDFKALGVEKVGEKRYN.

The ATP-grasp domain maps to 141 to 347 (KRILNQAGIR…YSELIDRLIQ (207 aa)). 171–226 (KEELGDLVFVKPAKQGSSVGIHKVDTEEEYETAMKDAFTYDYKVLVEAGIKNPREI) serves as a coordination point for ATP. 3 residues coordinate Mg(2+): D301, E314, and N316.

This sequence belongs to the D-alanine--D-alanine ligase family. Mg(2+) serves as cofactor. Requires Mn(2+) as cofactor.

The protein resides in the cytoplasm. It carries out the reaction 2 D-alanine + ATP = D-alanyl-D-alanine + ADP + phosphate + H(+). It functions in the pathway cell wall biogenesis; peptidoglycan biosynthesis. In terms of biological role, cell wall formation. The chain is D-alanine--D-alanine ligase from Limosilactobacillus fermentum (strain NBRC 3956 / LMG 18251) (Lactobacillus fermentum).